Here is a 387-residue protein sequence, read N- to C-terminus: Phosphoglycerate kinase (387 aa).

Residues 21-23 (DLN), Arg-36, and 59-62 (HLGR) contribute to the substrate site. Lys-84 bears the N6-acetyllysine mark. Arg-113 and Arg-146 together coordinate substrate. Residues Lys-197, Glu-314, and 340–343 (GGDT) each bind ATP.

Belongs to the phosphoglycerate kinase family. In terms of assembly, monomer.

It localises to the cytoplasm. The catalysed reaction is (2R)-3-phosphoglycerate + ATP = (2R)-3-phospho-glyceroyl phosphate + ADP. Its pathway is carbohydrate degradation; glycolysis; pyruvate from D-glyceraldehyde 3-phosphate: step 2/5. In Escherichia coli O9:H4 (strain HS), this protein is Phosphoglycerate kinase.